A 492-amino-acid chain; its full sequence is Spindle assembly abnormal protein 6 (492 aa).

In terms of domain architecture, PISA spans 46-98 (SGEKELKFEISRSDDFEFLFSETLNNEKYQILARDHDLTVDFDAFPKVIIQHL). Residues 192 to 407 (KSADELASLR…KIAHYRAQRF (216 aa)) adopt a coiled-coil conformation.

As to quaternary structure, nine homodimers form a cartwheel structure with an internal diameter of 23 nM and radial spokes connecting to the microtubule triplets. Interacts with sas-5.

The protein resides in the cytoplasm. Its subcellular location is the cytoskeleton. It is found in the microtubule organizing center. The protein localises to the centrosome. It localises to the centriole. Functionally, central scaffolding component of the centrioles ensuring their 9-fold symmetry. Required for centrosome biogenesis and duplication. The sequence is that of Spindle assembly abnormal protein 6 from Caenorhabditis elegans.